A 384-amino-acid chain; its full sequence is Heparin lyase I (384 aa).

Residues 1–21 (MKKQILYLIVLQQLFLCSAYA) form the signal peptide. The residue at position 22 (glutamine 22) is a Blocked amino end (Gln). The O-linked (Man...) serine glycan is linked to serine 39.

In terms of assembly, monomer. Post-translationally, the N-terminus is blocked.

The protein localises to the periplasm. It carries out the reaction Eliminative cleavage of polysaccharides containing (1-&gt;4)-linked D-glucuronate or L-iduronate residues and (1-&gt;4)-alpha-linked 2-sulfoamino-2-deoxy-6-sulfo-D-glucose residues to give oligosaccharides with terminal 4-deoxy-alpha-D-gluc-4-enuronosyl groups at their non-reducing ends.. In terms of biological role, degrades heparin and heparan sulfate. Also implicated in the release of heparin-bound growth factors from the extracellular matrix. This is Heparin lyase I from Pedobacter heparinus (Flavobacterium heparinum).